Reading from the N-terminus, the 187-residue chain is Ion-translocating oxidoreductase complex subunit B (187 aa).

The segment at 1–26 is hydrophobic; sequence MTHILFAVLVLALLALAFGIILGFAA. The 59-residue stretch at 32–90 folds into the 4Fe-4S domain; the sequence is EADPIVDQLDALLPQTQCGQCGYPGCKPYAEALANGDQINKCVPGGDATMRKIADLMGV. Residues Cys-49, Cys-52, Cys-57, Cys-73, Cys-115, Cys-118, Cys-121, Cys-125, Cys-145, Cys-148, Cys-151, and Cys-155 each contribute to the [4Fe-4S] cluster site. 2 consecutive 4Fe-4S ferredoxin-type domains span residues 106 to 135 and 136 to 165; these read KVAF…GATK and AMHT…MIPV.

Belongs to the 4Fe4S bacterial-type ferredoxin family. RnfB subfamily. The complex is composed of six subunits: RnfA, RnfB, RnfC, RnfD, RnfE and RnfG. [4Fe-4S] cluster serves as cofactor.

The protein localises to the cell inner membrane. Functionally, part of a membrane-bound complex that couples electron transfer with translocation of ions across the membrane. This chain is Ion-translocating oxidoreductase complex subunit B, found in Aeromonas hydrophila subsp. hydrophila (strain ATCC 7966 / DSM 30187 / BCRC 13018 / CCUG 14551 / JCM 1027 / KCTC 2358 / NCIMB 9240 / NCTC 8049).